A 228-amino-acid chain; its full sequence is Putative NAC domain-containing protein 61 (228 aa).

Positions 5-156 (LSVGFRFYPT…KSGSSRAFDR (152 aa)) constitute an NAC domain. Disordered regions lie at residues 77–96 (ARGG…ATGS) and 166–197 (RNLP…QVDL). Over residues 80–89 (GRPSRTTGSG) the composition is skewed to low complexity. The segment covering 168 to 193 (LPSNGVETSSRATISTSPETSHSGGN) has biased composition (polar residues).

It is found in the nucleus. The chain is Putative NAC domain-containing protein 61 (NAC061) from Arabidopsis thaliana (Mouse-ear cress).